Reading from the N-terminus, the 569-residue chain is Proline--tRNA ligase (569 aa).

It belongs to the class-II aminoacyl-tRNA synthetase family. ProS type 1 subfamily. As to quaternary structure, homodimer.

It is found in the cytoplasm. The catalysed reaction is tRNA(Pro) + L-proline + ATP = L-prolyl-tRNA(Pro) + AMP + diphosphate. Its function is as follows. Catalyzes the attachment of proline to tRNA(Pro) in a two-step reaction: proline is first activated by ATP to form Pro-AMP and then transferred to the acceptor end of tRNA(Pro). As ProRS can inadvertently accommodate and process non-cognate amino acids such as alanine and cysteine, to avoid such errors it has two additional distinct editing activities against alanine. One activity is designated as 'pretransfer' editing and involves the tRNA(Pro)-independent hydrolysis of activated Ala-AMP. The other activity is designated 'posttransfer' editing and involves deacylation of mischarged Ala-tRNA(Pro). The misacylated Cys-tRNA(Pro) is not edited by ProRS. The chain is Proline--tRNA ligase from Legionella pneumophila subsp. pneumophila (strain Philadelphia 1 / ATCC 33152 / DSM 7513).